Consider the following 360-residue polypeptide: Probable butyrate kinase (360 aa).

The protein belongs to the acetokinase family.

It is found in the cytoplasm. The enzyme catalyses butanoate + ATP = butanoyl phosphate + ADP. The chain is Probable butyrate kinase from Enterococcus faecalis (strain ATCC 700802 / V583).